Consider the following 207-residue polypeptide: Small ribosomal subunit protein uS4c (207 aa).

The region spanning 92–153 is the S4 RNA-binding domain; that stretch reads MRLDNILFRL…PKIYQSIITK (62 aa).

It belongs to the universal ribosomal protein uS4 family. Part of the 30S ribosomal subunit. Contacts protein S5. The interaction surface between S4 and S5 is involved in control of translational fidelity.

The protein resides in the plastid. The protein localises to the chloroplast. One of the primary rRNA binding proteins, it binds directly to 16S rRNA where it nucleates assembly of the body of the 30S subunit. Functionally, with S5 and S12 plays an important role in translational accuracy. The protein is Small ribosomal subunit protein uS4c (rps4) of Equisetum bogotense (Horsetail).